A 93-amino-acid chain; its full sequence is Large ribosomal subunit protein uL23cz/uL23cy (93 aa).

It belongs to the universal ribosomal protein uL23 family. Part of the 50S ribosomal subunit.

Its subcellular location is the plastid. It is found in the chloroplast. Functionally, binds to 23S rRNA. The protein is Large ribosomal subunit protein uL23cz/uL23cy (rpl23-A) of Drimys granadensis.